Reading from the N-terminus, the 96-residue chain is Co-chaperonin GroES (96 aa).

It belongs to the GroES chaperonin family. Heptamer of 7 subunits arranged in a ring. Interacts with the chaperonin GroEL.

It localises to the cytoplasm. In terms of biological role, together with the chaperonin GroEL, plays an essential role in assisting protein folding. The GroEL-GroES system forms a nano-cage that allows encapsulation of the non-native substrate proteins and provides a physical environment optimized to promote and accelerate protein folding. GroES binds to the apical surface of the GroEL ring, thereby capping the opening of the GroEL channel. This is Co-chaperonin GroES from Legionella pneumophila (strain Paris).